A 345-amino-acid chain; its full sequence is Nuclear egress protein 1 (345 aa).

A CCCH-type zinc finger spans residues 115–247 (CISLSEMGYT…FVFKPGSPLH (133 aa)).

It belongs to the herpesviridae NEC1 protein family. Forms a heterohexameric complex with NEC2. Interacts with capsid vertex specific component 2/CVC2; this interaction directs the capsid to the host inner nuclear membrane to initiate budding. Phosphorylated at serine residues in the N-terminus. This phosphorylation regulates the localization within the inner nuclear membrane.

It is found in the host nucleus inner membrane. In terms of biological role, plays an essential role in virion nuclear egress, the first step of virion release from infected cell. Within the host nucleus, NEC1 interacts with the newly formed capsid through the vertexes and directs it to the inner nuclear membrane by associating with NEC2. Induces the budding of the capsid at the inner nuclear membrane as well as its envelopment into the perinuclear space. There, the NEC1/NEC2 complex promotes the fusion of the enveloped capsid with the outer nuclear membrane and the subsequent release of the viral capsid into the cytoplasm where it will reach the secondary budding sites in the host Golgi or trans-Golgi network. In Psittacid herpesvirus 1 (isolate Amazon parrot/-/97-0001/1997) (PsHV-1), this protein is Nuclear egress protein 1.